Reading from the N-terminus, the 453-residue chain is Kynureninase (453 aa).

Pyridoxal 5'-phosphate-binding positions include Leu-114, Thr-115, 142–145, Asp-232, His-235, and Tyr-257; that span reads FPSD. At Lys-258 the chain carries N6-(pyridoxal phosphate)lysine. Trp-286 contacts pyridoxal 5'-phosphate.

It belongs to the kynureninase family. As to quaternary structure, homodimer. Requires pyridoxal 5'-phosphate as cofactor.

Its subcellular location is the cytoplasm. The catalysed reaction is L-kynurenine + H2O = anthranilate + L-alanine + H(+). It catalyses the reaction 3-hydroxy-L-kynurenine + H2O = 3-hydroxyanthranilate + L-alanine + H(+). It participates in amino-acid degradation; L-kynurenine degradation; L-alanine and anthranilate from L-kynurenine: step 1/1. Its pathway is cofactor biosynthesis; NAD(+) biosynthesis; quinolinate from L-kynurenine: step 2/3. In terms of biological role, catalyzes the cleavage of L-kynurenine (L-Kyn) and L-3-hydroxykynurenine (L-3OHKyn) into anthranilic acid (AA) and 3-hydroxyanthranilic acid (3-OHAA), respectively. The polypeptide is Kynureninase (Cryptococcus neoformans var. neoformans serotype D (strain JEC21 / ATCC MYA-565) (Filobasidiella neoformans)).